A 640-amino-acid polypeptide reads, in one-letter code: Threonine--tRNA ligase (640 aa).

Residues methionine 1–threonine 61 form the TGS domain. Residues aspartate 242–proline 533 form a catalytic region. The Zn(2+) site is built by cysteine 333, histidine 384, and histidine 510.

This sequence belongs to the class-II aminoacyl-tRNA synthetase family. Homodimer. Requires Zn(2+) as cofactor.

Its subcellular location is the cytoplasm. It carries out the reaction tRNA(Thr) + L-threonine + ATP = L-threonyl-tRNA(Thr) + AMP + diphosphate + H(+). Its function is as follows. Catalyzes the attachment of threonine to tRNA(Thr) in a two-step reaction: L-threonine is first activated by ATP to form Thr-AMP and then transferred to the acceptor end of tRNA(Thr). Also edits incorrectly charged L-seryl-tRNA(Thr). This Prochlorococcus marinus (strain NATL1A) protein is Threonine--tRNA ligase.